The primary structure comprises 926 residues: OTU domain-containing protein 7A (926 aa).

Residue Ser121 is modified to Phosphoserine. Residues 170-413 (ERDLIEQATM…AVDPGKDWEW (244 aa)) are TRAF-binding. Positions 185–452 (AGRLNWWSTV…VTWIRIPSET (268 aa)) are catalytic. In terms of domain architecture, OTU spans 201 to 377 (LLPLATTGDG…QAHFSALVSM (177 aa)). Asp209 is an active-site residue. Catalysis depends on Cys212, which acts as the Nucleophile. The Proton acceptor role is filled by His370. Disordered regions lie at residues 455–517 (PLAQ…DSVA), 540–615 (GLVH…GDAW), and 671–779 (EQEQ…ARQS). Residues 484 to 494 (VCSNSNSNNGK) show a composition bias toward low complexity. Residues 495-513 (NGKDKEKEKQRKDKDKTRA) are compositionally biased toward basic and acidic residues. Residues 497–512 (KDKEKEKQRKDKDKTR) carry the Nuclear localization signal motif. Composition is skewed to low complexity over residues 579–595 (GASASTSPSEKTTPSPT), 680–691 (AAAAAAATATAT), and 731–750 (SPGTGASARAARAAGGAASP). Gly residues predominate over residues 751–767 (GPGGGARRAAPGTGGPT). Arg880 bears the Omega-N-methylarginine mark. An A20-type zinc finger spans residues 884 to 919 (GPAQRRCQRENCAFYGRAETEHFCSYCYREELRRRR). Cys890, Cys895, Cys907, and Cys910 together coordinate Zn(2+).

This sequence belongs to the peptidase C64 family.

The protein localises to the cytoplasm. The protein resides in the nucleus. The catalysed reaction is Thiol-dependent hydrolysis of ester, thioester, amide, peptide and isopeptide bonds formed by the C-terminal Gly of ubiquitin (a 76-residue protein attached to proteins as an intracellular targeting signal).. Functionally, deubiquitinase, which cleaves 'Lys-11'-linked polyubiquitin chains. In Mus musculus (Mouse), this protein is OTU domain-containing protein 7A (Otud7a).